We begin with the raw amino-acid sequence, 38 residues long: Large ribosomal subunit protein bL36 (38 aa).

Belongs to the bacterial ribosomal protein bL36 family.

This Hamiltonella defensa subsp. Acyrthosiphon pisum (strain 5AT) protein is Large ribosomal subunit protein bL36.